The following is a 299-amino-acid chain: Putative peptidyl-prolyl cis-trans isomerase HP_0175 (299 aa).

Residues 1 to 21 form the signal peptide; that stretch reads MKKNILNLALVGALSTSFLMA. Positions 154 to 253 constitute a PpiC domain; sequence KQEAHARHIL…FGYHIIYLIS (100 aa).

It catalyses the reaction [protein]-peptidylproline (omega=180) = [protein]-peptidylproline (omega=0). This is Putative peptidyl-prolyl cis-trans isomerase HP_0175 from Helicobacter pylori (strain ATCC 700392 / 26695) (Campylobacter pylori).